The following is a 613-amino-acid chain: Autophagy-related protein 22-2 (613 aa).

Residues 1-28 (MVLNSTPPASPGAEAQQRPPRYPGEDTA) are disordered. A helical membrane pass occupies residues 41–61 (YGIAAEVFAVCGVGSFLPLTL). Residues 80–96 (GSSSPSTAPGNGTTTAT) are compositionally biased toward polar residues. The disordered stretch occupies residues 80–99 (GSSSPSTAPGNGTTTATLRR). Residue asparagine 90 is glycosylated (N-linked (GlcNAc...) asparagine). Helical transmembrane passes span 120–140 (SFAM…LISF), 155–177 (LAFG…PVYI), and 189–209 (CLGS…ANDP). A disordered region spans residues 216 to 257 (KEEGEELSPVNSSGEFARSEDLDEENVRDSDDHFTTGHGLKT). Asparagine 226 is a glycosylation site (N-linked (GlcNAc...) asparagine). Positions 232 to 250 (ARSEDLDEENVRDSDDHFT) are enriched in basic and acidic residues. 4 consecutive transmembrane segments (helical) span residues 278 to 298 (VGLG…MLFA), 307 to 327 (ISGT…WFSF), 382 to 402 (VIVF…VSGT), and 418 to 438 (VGLL…LWPV). N-linked (GlcNAc...) asparagine glycosylation occurs at asparagine 448. 4 consecutive transmembrane segments (helical) span residues 453-473 (LCIA…IPLF), 488-510 (FPLG…SFFG), 522-544 (YALY…GMLI), and 553-573 (GFFF…MVNA). A disordered region spans residues 592-613 (GEHASEYGGPSEEAEGLLARDI).

The protein belongs to the ATG22 family.

It localises to the vacuole membrane. Its function is as follows. Vacuolar effluxer which mediate the efflux of amino acids resulting from autophagic degradation. The release of autophagic amino acids allows the maintenance of protein synthesis and viability during nitrogen starvation. The polypeptide is Autophagy-related protein 22-2 (atg22-2) (Neosartorya fischeri (strain ATCC 1020 / DSM 3700 / CBS 544.65 / FGSC A1164 / JCM 1740 / NRRL 181 / WB 181) (Aspergillus fischerianus)).